The following is a 258-amino-acid chain: tRNA pseudouridine synthase A (258 aa).

Asp-52 (nucleophile) is an active-site residue. Tyr-110 is a substrate binding site.

The protein belongs to the tRNA pseudouridine synthase TruA family. In terms of assembly, homodimer.

The enzyme catalyses uridine(38/39/40) in tRNA = pseudouridine(38/39/40) in tRNA. In terms of biological role, formation of pseudouridine at positions 38, 39 and 40 in the anticodon stem and loop of transfer RNAs. This Francisella tularensis subsp. holarctica (strain FTNF002-00 / FTA) protein is tRNA pseudouridine synthase A.